A 472-amino-acid chain; its full sequence is Regulator of G-protein signaling 6 (472 aa).

Residues 40–115 (KTGGVPIRTV…DDGTFYRFQA (76 aa)) form the DEP domain. Residues 261–330 (IRKQITFLNA…MSKEPSQQRV (70 aa)) enclose the G protein gamma domain. The RGS domain occupies 336 to 441 (SFDEILKDQV…LMKSDSYARF (106 aa)).

In terms of assembly, interacts with GNB5. Interacts with RGS7BP, leading to regulate the subcellular location of the heterodimer formed with GNB5. Interacts with GNAI1.

It is found in the cytoplasm. Its subcellular location is the cytosol. It localises to the membrane. The protein localises to the nucleus. The protein resides in the cell membrane. Its function is as follows. Regulates G protein-coupled receptor signaling cascades. Inhibits signal transduction by increasing the GTPase activity of G protein alpha subunits, thereby driving them into their inactive GDP-bound form. The RGS6/GNB5 dimer enhances GNAO1 GTPase activity. This chain is Regulator of G-protein signaling 6 (RGS6), found in Homo sapiens (Human).